We begin with the raw amino-acid sequence, 282 residues long: Large ribosomal subunit protein uL2c (282 aa).

Residues 230 to 261 (SAQNAVDHPHGGGEGKAPIGRIPSTPWGKPAL) form a disordered region.

This sequence belongs to the universal ribosomal protein uL2 family. Part of the 50S ribosomal subunit.

It localises to the plastid. The sequence is that of Large ribosomal subunit protein uL2c (rpl2) from Helicosporidium sp. subsp. Simulium jonesii (Green alga).